The sequence spans 186 residues: Adrenodoxin, mitochondrial (186 aa).

A mitochondrion-targeting transit peptide spans 1–58 (MAVRLLRVASAALGDTAVRWQPLVGPRAGNRGPGGSIWLGLGGRAAAARTLSLSARAW). At serine 61 the chain carries Phosphoserine. At lysine 64 the chain carries N6-acetyllysine; alternate. Lysine 64 carries the post-translational modification N6-succinyllysine; alternate. In terms of domain architecture, 2Fe-2S ferredoxin-type spans 65 to 169 (ITVHFINRDG…NMTVRVPEAV (105 aa)). Residues cysteine 104, cysteine 110, cysteine 113, and cysteine 150 each contribute to the [2Fe-2S] cluster site. Lysine 156 is subject to N6-succinyllysine. Serine 175 carries the phosphoserine modification.

This sequence belongs to the adrenodoxin/putidaredoxin family. In terms of assembly, interacts with CYP11A1. [2Fe-2S] cluster serves as cofactor.

The protein localises to the mitochondrion matrix. Functionally, essential for the synthesis of various steroid hormones. Participates in the reduction of mitochondrial cytochrome P450 for steroidogenesis. Transfers electrons from adrenodoxin reductase to CYP11A1, a cytochrome P450 that catalyzes cholesterol side-chain cleavage. Does not form a ternary complex with adrenodoxin reductase and CYP11A1 but shuttles between the two enzymes to transfer electrons. The chain is Adrenodoxin, mitochondrial (FDX1) from Sus scrofa (Pig).